We begin with the raw amino-acid sequence, 292 residues long: 4-hydroxy-tetrahydrodipicolinate synthase (292 aa).

A pyruvate-binding site is contributed by threonine 45. Residue tyrosine 133 is the Proton donor/acceptor of the active site. Lysine 161 functions as the Schiff-base intermediate with substrate in the catalytic mechanism. Pyruvate is bound at residue isoleucine 203.

This sequence belongs to the DapA family. As to quaternary structure, homodimer.

It is found in the cytoplasm. The enzyme catalyses L-aspartate 4-semialdehyde + pyruvate = (2S,4S)-4-hydroxy-2,3,4,5-tetrahydrodipicolinate + H2O + H(+). The protein operates within amino-acid biosynthesis; L-lysine biosynthesis via DAP pathway; (S)-tetrahydrodipicolinate from L-aspartate: step 3/4. In terms of biological role, catalyzes the condensation of (S)-aspartate-beta-semialdehyde [(S)-ASA] and pyruvate to 4-hydroxy-tetrahydrodipicolinate (HTPA). The polypeptide is 4-hydroxy-tetrahydrodipicolinate synthase (Stutzerimonas stutzeri (strain A1501) (Pseudomonas stutzeri)).